Consider the following 360-residue polypeptide: G-protein coupled receptor 15 (360 aa).

The Extracellular portion of the chain corresponds to 1-33 (MDPEETSVYLDYYYATSPNPDIRETHSHVPYTS). A helical transmembrane segment spans residues 34 to 54 (VFLPVFYTAVFLTGVLGNLVL). Residues 55 to 69 (MGALHFKPGSRRLID) lie on the Cytoplasmic side of the membrane. The chain crosses the membrane as a helical span at residues 70-90 (IFIINLAASDFIFLVTLPLWV). Topologically, residues 91–120 (DKEASLGLWRTGSFLCKGSSYMISVNMHCS) are extracellular. The helical transmembrane segment at 121-141 (VFLLTCMSVDRYLAIVCPVVS) threads the bilayer. At 142 to 149 (RKFRRTDC) the chain is on the cytoplasmic side. The helical transmembrane segment at 150–170 (AYVVCASIWFISCLLGLPTLL) threads the bilayer. At 171-192 (SRELTLIDDKPYCAEKKATPLK) the chain is on the extracellular side. The chain crosses the membrane as a helical span at residues 193 to 213 (LIWSLVALIFTFFVPLLSIVT). Over 214–239 (CYCCIARKLCAHYQQSGKHNKKLKKS) the chain is Cytoplasmic. The helical transmembrane segment at 240–260 (IKIIFIVVAAFLVSWLPFNTS) threads the bilayer. Over 261-284 (KLLAIVSGLQQERYFPSAILQLGM) the chain is Extracellular. Residues 285 to 305 (EVSGPLAFANSCVNPFIYYIF) form a helical membrane-spanning segment. At 306–360 (DSYIRRAIVHCLCPCLKNYDFGSSTETSDSHLTKALSTFIHAEDFTRRRKRSVSL) the chain is on the cytoplasmic side. A Phosphoserine modification is found at S359.

Belongs to the G-protein coupled receptor 1 family. As to quaternary structure, interacts with adapter YWHAE; this interaction promotes ER-to-Golgi transport of GPR15. Post-translationally, phosphorylation is necessary for YWHAE binding and efficient surface expression. In terms of processing, O-glycosylated. Sialylated O-glycans in the N-terminal tail inhibits binding of GPR15LG. Sulfation is required for efficient binding of GPR15LG.

Its subcellular location is the cell membrane. Functionally, g protein-coupled receptor that plays an important role in immune homeostasis. Acts via its natural ligand GPR15LG, a chemokine-like polypeptide strongly expressed in gastrointestinal tissues. GPR15-GPR15LG signaling axis regulates intestinal homeostasis and inflammation through the migration of immune cells. Controls thereby the specific homing of T-cells, particularly FOXP3+ regulatory T-cells (Tregs), to the large intestine lamina propria. Also required for skin localization of thymus-derived dendritic epidermal T-cells. Plays an important role in mediating cytoprotective function as well as angiogenesis of thrombomodulin. Mechanistically, preferentially signals through the Gi/o pathway to inhibit adenylate cyclase activity and activate a phosphatidylinositol-calcium second messenger system that regulates the release of Ca(2+) ions from intracellular stores. The chain is G-protein coupled receptor 15 (GPR15) from Macaca nemestrina (Pig-tailed macaque).